Here is a 183-residue protein sequence, read N- to C-terminus: Large ribosomal subunit protein uL5 (183 aa).

This sequence belongs to the universal ribosomal protein uL5 family. In terms of assembly, part of the 50S ribosomal subunit; part of the 5S rRNA/L5/L18/L25 subcomplex. Contacts the 5S rRNA and the P site tRNA. Forms a bridge to the 30S subunit in the 70S ribosome.

Its function is as follows. This is one of the proteins that bind and probably mediate the attachment of the 5S RNA into the large ribosomal subunit, where it forms part of the central protuberance. In the 70S ribosome it contacts protein S13 of the 30S subunit (bridge B1b), connecting the 2 subunits; this bridge is implicated in subunit movement. Contacts the P site tRNA; the 5S rRNA and some of its associated proteins might help stabilize positioning of ribosome-bound tRNAs. The sequence is that of Large ribosomal subunit protein uL5 from Legionella pneumophila (strain Lens).